The primary structure comprises 358 residues: 5-amino-6-(D-ribitylamino)uracil--L-tyrosine 4-hydroxyphenyl transferase 2 (358 aa).

In terms of domain architecture, Radical SAM core spans 45–292; that stretch reads VTFVKNTNIE…ESIKNIQAPR (248 aa). Residues Cys-59, Cys-63, and Cys-66 each contribute to the [4Fe-4S] cluster site.

The protein belongs to the radical SAM superfamily. CofH family. As to quaternary structure, consists of two subunits, CofG and CofH. It depends on [4Fe-4S] cluster as a cofactor.

The catalysed reaction is 5-amino-6-(D-ribitylamino)uracil + L-tyrosine + S-adenosyl-L-methionine = 5-amino-5-(4-hydroxybenzyl)-6-(D-ribitylimino)-5,6-dihydrouracil + 2-iminoacetate + 5'-deoxyadenosine + L-methionine + H(+). The protein operates within cofactor biosynthesis; coenzyme F0 biosynthesis. Functionally, catalyzes the radical-mediated synthesis of 5-amino-5-(4-hydroxybenzyl)-6-(D-ribitylimino)-5,6-dihydrouracil from 5-amino-6-(D-ribitylamino)uracil and L-tyrosine. The polypeptide is 5-amino-6-(D-ribitylamino)uracil--L-tyrosine 4-hydroxyphenyl transferase 2 (Methanococcus maripaludis (strain DSM 14266 / JCM 13030 / NBRC 101832 / S2 / LL)).